The sequence spans 1107 residues: Phospholipid-transporting ATPase 2 (1107 aa).

The Cytoplasmic portion of the chain corresponds to 1–33; the sequence is MKRFVYINDDEASKELCCDNRISNRKYTLWNFL. A helical transmembrane segment spans residues 34–55; sequence PKNLWEQFSRFMNQYFLLIACL. The Extracellular segment spans residues 56–60; that stretch reads QLWSL. The helical transmembrane segment at 61–83 threads the bilayer; sequence ITPVNPASTWGPLIFIFAVSASK. Residues 84–268 lie on the Cytoplasmic side of the membrane; sequence EAWDDYHRYL…TAMDAMIDKL (185 aa). The helical transmembrane segment at 269–290 threads the bilayer; that stretch reads TGAIFVFQIVVVLVLGIAGNVW. Topologically, residues 291–315 are extracellular; it reads KDTEARKQWYVQYPEEAPWYELLVI. The helical transmembrane segment at 316–333 threads the bilayer; that stretch reads PLRFELLCSIMIPISIKV. At 334 to 807 the chain is on the cytoplasmic side; the sequence is SLDLVKGLYA…HGRYSYNRTA (474 aa). The active-site 4-aspartylphosphate intermediate is Asp381. Residues Asp752 and Asp756 each coordinate Mg(2+). The chain crosses the membrane as a helical span at residues 808–827; the sequence is FLSQYSFYKSLLICFIQIFF. Residues 828–841 lie on the Extracellular side of the membrane; it reads SFISGVSGTSLFNS. A helical transmembrane segment spans residues 842 to 860; it reads VSLMAYNVFYTSVPVLVSV. The Cytoplasmic segment spans residues 861–890; that stretch reads IDKDLSEASVMQHPQILFYCQAGRLLNPST. Residues 891–912 traverse the membrane as a helical segment; the sequence is FAGWFGRSLFHAIIVFVITIHA. Residues 913–919 are Extracellular-facing; it reads YAYEKSE. Residues 920–942 form a helical membrane-spanning segment; it reads MEELGMVALSGCIWLQAFVVAQE. Over 943–948 the chain is Cytoplasmic; sequence TNSFTV. A helical transmembrane segment spans residues 949-969; that stretch reads LQHLSIWGNLVGFYAINFLFS. At 970-982 the chain is on the extracellular side; sequence AIPSSGMYTIMFR. A helical membrane pass occupies residues 983-1007; sequence LCSQPSYWITMFLIVGAGMGPIFAL. Over 1008–1107 the chain is Cytoplasmic; the sequence is KYFRYTYRPS…SGYTRNCKDN (100 aa). The segment at 1048–1075 is disordered; it reads DLSPISITQPKNRSPVYEPLLSDSPNAT. Ser1050 is modified (phosphoserine).

It belongs to the cation transport ATPase (P-type) (TC 3.A.3) family. Type IV subfamily. Interacts with ALIS1, ALIS3 and ALIS5 in a heterologous system.

The protein localises to the endoplasmic reticulum membrane. It localises to the prevacuolar compartment membrane. The catalysed reaction is ATP + H2O + phospholipidSide 1 = ADP + phosphate + phospholipidSide 2.. Involved in transport of phospholipids. Contributes to transmembrane flipping of lipids. Requires an interaction with a protein of the ALIS family for activity. Specific for phosphatidylserine and has no activity with lysolipid, phosphatidylcholine or phosphatidylethanolamine. The polypeptide is Phospholipid-transporting ATPase 2 (Arabidopsis thaliana (Mouse-ear cress)).